A 424-amino-acid polypeptide reads, in one-letter code: GTPase Obg (424 aa).

The 158-residue stretch at 1–158 (MFIDTAKIFV…RWIKLELKLL (158 aa)) folds into the Obg domain. Residues 159–331 (ADVGLIGFPN…LMKEAARLLS (173 aa)) form the OBG-type G domain. Residues 165–172 (GFPNVGKS), 190–194 (FTTLK), 212–215 (DIPG), 282–285 (NKSD), and 312–314 (SAA) contribute to the GTP site. Positions 172 and 192 each coordinate Mg(2+). One can recognise an OCT domain in the interval 345 to 424 (RFIEEEKRFT…LNDFEFDFLL (80 aa)).

The protein belongs to the TRAFAC class OBG-HflX-like GTPase superfamily. OBG GTPase family. As to quaternary structure, monomer. It depends on Mg(2+) as a cofactor.

Its subcellular location is the cytoplasm. Its function is as follows. An essential GTPase which binds GTP, GDP and possibly (p)ppGpp with moderate affinity, with high nucleotide exchange rates and a fairly low GTP hydrolysis rate. Plays a role in control of the cell cycle, stress response, ribosome biogenesis and in those bacteria that undergo differentiation, in morphogenesis control. The chain is GTPase Obg from Clostridium botulinum (strain Langeland / NCTC 10281 / Type F).